A 529-amino-acid polypeptide reads, in one-letter code: MTNRNVIKNVLISVSDTSNIIEFSKSLISKNIKLFATKGTANFLKKNNIYATDITNYTNFPEIMNGRIKTLHHKIYASILAQPKHDKKTIEKYNIILMDIVVINFYPFEEASNNTNLHLNDIIEHIDIGGPAIVRAAAKNYKNVLVVTQPNLYQSIVNEMNLNNNIISETTKLKFATIAFKHTMNYDNNIYQYLSKKNKTVPKNTQLQTLLPSHLTINFKKKQDLCYGENKQQQASWYTNTSKNTSGRMKIKQLQGKILSYNNLSDIHLALSCIHEFNKTTCAIIKHGNPCGVATAKNNDQAYKLAYETDPISAFGGIIVFNQKLNDVTARKIIKTQFSEIILAPDFTQEAKKIFDKKPNLRIIKYDPNYNYLNYNIDIKSIYGDILVQSNTNSIININQWDIVSKKRPNEQEINDAKFALRVVKHLKSNSIVLIKNQITISIGSGQTSRIDATKIAIYKANNNNISLNHTTLASDAFFPFSDSIDLISKSGITCIVQPGGSIRDNEIIMSANKYNISMIFTKQRYFKH.

In terms of domain architecture, MGS-like spans 1-148 (MTNRNVIKNV…KNYKNVLVVT (148 aa)).

Belongs to the PurH family.

The catalysed reaction is (6R)-10-formyltetrahydrofolate + 5-amino-1-(5-phospho-beta-D-ribosyl)imidazole-4-carboxamide = 5-formamido-1-(5-phospho-D-ribosyl)imidazole-4-carboxamide + (6S)-5,6,7,8-tetrahydrofolate. It catalyses the reaction IMP + H2O = 5-formamido-1-(5-phospho-D-ribosyl)imidazole-4-carboxamide. It participates in purine metabolism; IMP biosynthesis via de novo pathway; 5-formamido-1-(5-phospho-D-ribosyl)imidazole-4-carboxamide from 5-amino-1-(5-phospho-D-ribosyl)imidazole-4-carboxamide (10-formyl THF route): step 1/1. The protein operates within purine metabolism; IMP biosynthesis via de novo pathway; IMP from 5-formamido-1-(5-phospho-D-ribosyl)imidazole-4-carboxamide: step 1/1. This is Bifunctional purine biosynthesis protein PurH from Buchnera aphidicola subsp. Baizongia pistaciae (strain Bp).